Reading from the N-terminus, the 301-residue chain is Elongation factor Ts (301 aa).

Positions 82–85 are involved in Mg(2+) ion dislocation from EF-Tu; that stretch reads TDFV.

The protein belongs to the EF-Ts family.

It localises to the cytoplasm. Associates with the EF-Tu.GDP complex and induces the exchange of GDP to GTP. It remains bound to the aminoacyl-tRNA.EF-Tu.GTP complex up to the GTP hydrolysis stage on the ribosome. This chain is Elongation factor Ts, found in Hyphomonas neptunium (strain ATCC 15444).